The following is a 732-amino-acid chain: Elongation factor 2 (732 aa).

Positions 19–260 constitute a tr-type G domain; that stretch reads ERIRNIGIAA…MVVRHLPSPI (242 aa). GTP is bound by residues 28-35, 94-98, and 148-151; these read AHIDHGKT, DTPGH, and NKVD. Histidine 597 carries the diphthamide modification.

It belongs to the TRAFAC class translation factor GTPase superfamily. Classic translation factor GTPase family. EF-G/EF-2 subfamily.

It is found in the cytoplasm. Functionally, catalyzes the GTP-dependent ribosomal translocation step during translation elongation. During this step, the ribosome changes from the pre-translocational (PRE) to the post-translocational (POST) state as the newly formed A-site-bound peptidyl-tRNA and P-site-bound deacylated tRNA move to the P and E sites, respectively. Catalyzes the coordinated movement of the two tRNA molecules, the mRNA and conformational changes in the ribosome. In Pyrococcus horikoshii (strain ATCC 700860 / DSM 12428 / JCM 9974 / NBRC 100139 / OT-3), this protein is Elongation factor 2 (fusA).